A 261-amino-acid chain; its full sequence is Acyl-[acyl-carrier-protein]--UDP-N-acetylglucosamine O-acyltransferase (261 aa).

It belongs to the transferase hexapeptide repeat family. LpxA subfamily. As to quaternary structure, homotrimer.

Its subcellular location is the cytoplasm. The enzyme catalyses a (3R)-hydroxyacyl-[ACP] + UDP-N-acetyl-alpha-D-glucosamine = a UDP-3-O-[(3R)-3-hydroxyacyl]-N-acetyl-alpha-D-glucosamine + holo-[ACP]. Its pathway is glycolipid biosynthesis; lipid IV(A) biosynthesis; lipid IV(A) from (3R)-3-hydroxytetradecanoyl-[acyl-carrier-protein] and UDP-N-acetyl-alpha-D-glucosamine: step 1/6. Involved in the biosynthesis of lipid A, a phosphorylated glycolipid that anchors the lipopolysaccharide to the outer membrane of the cell. In Sulfurimonas denitrificans (strain ATCC 33889 / DSM 1251) (Thiomicrospira denitrificans (strain ATCC 33889 / DSM 1251)), this protein is Acyl-[acyl-carrier-protein]--UDP-N-acetylglucosamine O-acyltransferase.